The following is a 209-amino-acid chain: Na(+)-translocating NADH-quinone reductase subunit D (209 aa).

5 helical membrane passes run 42–62 (VVMT…ISLI), 66–86 (IPNS…VIVV), 95–115 (FEIS…CIVM), 131–151 (FMDG…VGFL), and 178–198 (NGLF…IWAL).

Belongs to the NqrDE/RnfAE family. As to quaternary structure, composed of six subunits; NqrA, NqrB, NqrC, NqrD, NqrE and NqrF.

It localises to the cell inner membrane. It carries out the reaction a ubiquinone + n Na(+)(in) + NADH + H(+) = a ubiquinol + n Na(+)(out) + NAD(+). In terms of biological role, NQR complex catalyzes the reduction of ubiquinone-1 to ubiquinol by two successive reactions, coupled with the transport of Na(+) ions from the cytoplasm to the periplasm. NqrA to NqrE are probably involved in the second step, the conversion of ubisemiquinone to ubiquinol. This Serratia proteamaculans (strain 568) protein is Na(+)-translocating NADH-quinone reductase subunit D.